The sequence spans 708 residues: Protein psiF (708 aa).

The signal sequence occupies residues 1–19; the sequence is MKYLFIAIILILYCSFTKA. The Extracellular segment spans residues 20–643; that stretch reads DQKKFLVNMY…QSTAVKVGVG (624 aa). N-linked (GlcNAc...) asparagine glycans are attached at residues Asn-78, Asn-116, Asn-222, Asn-317, Asn-318, Asn-371, Asn-498, and Asn-600. One can recognise a PA14 domain in the interval 103–263; sequence TQTAGSQNYY…YDYCGICNGK (161 aa). Residues 644-664 form a helical membrane-spanning segment; the sequence is IGAAAAAGIAIGGAVAAGLAI. Residues 665–708 are Cytoplasmic-facing; it reads FGGKKAYDTWKTSRGNVMTGSQSNPLYTQNQNNGNNPLYSAPAE. Residues 682-702 show a composition bias toward polar residues; it reads MTGSQSNPLYTQNQNNGNNPL. The interval 682–708 is disordered; that stretch reads MTGSQSNPLYTQNQNNGNNPLYSAPAE.

Belongs to the prespore-cell-inducing factor family. Forms a complex with dicB.

It localises to the membrane. The protein localises to the secreted. Functionally, acts as a quorum sensing protein regulating discoidin gene expression during growth and development. D.discoideum is a single-celled amoebae and switches to multicellular development when food becomes limited. As the growing cells reach a high density, they begin expressing discoidin genes. The ability of psiF/dicA to induce discoidin gene expression when present in conditioned medium, suggests that it allows cells to sense their local density. In Dictyostelium discoideum (Social amoeba), this protein is Protein psiF (psiF).